A 363-amino-acid chain; its full sequence is Jasmonate-induced oxygenase 3 (363 aa).

The Fe2OG dioxygenase domain maps to 210–312 (ESGGCLRVNY…RLSLAFFYNP (103 aa)). Residue arginine 216 coordinates jasmonate. 2-oxoglutarate is bound by residues asparagine 218 and tyrosine 220. 3 residues coordinate Fe cation: histidine 235, aspartate 237, and histidine 293. Residues arginine 303 and serine 305 each contribute to the 2-oxoglutarate site. Jasmonate-binding residues include arginine 342 and arginine 346.

The protein belongs to the iron/ascorbate-dependent oxidoreductase family. Requires L-ascorbate as cofactor. The cofactor is Fe(2+).

It catalyses the reaction jasmonate + 2-oxoglutarate + O2 = (1R,2R)-12-hydroxyjasmonate + succinate + CO2. Its function is as follows. 2-oxoglutarate-dependent dioxygenase involved in the oxidation of jasmonate (JA), a stress-induced phytohormone synthesized in response to attack by pathogens and herbivores, which triggers the activation of defense responses via the JA-mediated signaling pathway. Converts JA to 12-hydroxyjasmonate (12OH-JA), an inactive form of JA. Is specific to free JA, and cannot oxidize the bioactive form jasmonoyl-L-isoleucine (JA-Ile) or other JA-amino acid conjugates. Prevents over-accumulation of JA and indirectly its bioactive form JA-Ile under stress response. Acts as a negative regulator of JA-mediated defense signaling, by contributing to 12OH-JA accumulation, which represses JA defense responses upon infection by the fungal pathogen Botrytis cinerea. Acts as a negative regulator of JA-mediated defense responses upon infestation by the herbivorous caterpillar Mamestra brassicae. The chain is Jasmonate-induced oxygenase 3 from Arabidopsis thaliana (Mouse-ear cress).